The following is a 361-amino-acid chain: NAD(P)H-quinone oxidoreductase subunit 1, chloroplastic (361 aa).

7 helical membrane-spanning segments follow: residues 28–48 (IWVLIPILTLVLGITLGVLVI), 99–119 (FTIGPSIAVISILLSYSVIPF), 128–148 (LSIGVFLWIAVSSLAPIGLLM), 249–269 (YSGIKFGLFYVASYLNLLVSS), 270–290 (LFVTVLYLGGWNLSIPYLFVP), 301–321 (TIICIFITLAKTYLFLFISIA), and 341–361 (FLLPISLGNLLLTTSFQLLSL).

It belongs to the complex I subunit 1 family. NDH is composed of at least 16 different subunits, 5 of which are encoded in the nucleus.

The protein localises to the plastid. The protein resides in the chloroplast thylakoid membrane. The catalysed reaction is a plastoquinone + NADH + (n+1) H(+)(in) = a plastoquinol + NAD(+) + n H(+)(out). It catalyses the reaction a plastoquinone + NADPH + (n+1) H(+)(in) = a plastoquinol + NADP(+) + n H(+)(out). NDH shuttles electrons from NAD(P)H:plastoquinone, via FMN and iron-sulfur (Fe-S) centers, to quinones in the photosynthetic chain and possibly in a chloroplast respiratory chain. The immediate electron acceptor for the enzyme in this species is believed to be plastoquinone. Couples the redox reaction to proton translocation, and thus conserves the redox energy in a proton gradient. The polypeptide is NAD(P)H-quinone oxidoreductase subunit 1, chloroplastic (Jasminum nudiflorum (Winter jasmine)).